Here is a 403-residue protein sequence, read N- to C-terminus: GPI mannosyltransferase 1 (403 aa).

Residues 1–4 (MTGE) lie on the Cytoplasmic side of the membrane. Residues 5-25 (EWGLTVLSFLVRVGFFLFGIY) traverse the membrane as a helical segment. The Lumenal segment spans residues 26-78 (QDANFKVRYTDIDYFVFHDAAKYVYEGKSPYARDTYRYTPLLSWLLVPNHYFG). The chain crosses the membrane as a helical span at residues 79–99 (WFHLGKVIFVIFDLVTGLIIM). Residues 100–110 (KLLNQAISRKR) lie on the Cytoplasmic side of the membrane. A helical transmembrane segment spans residues 111 to 131 (ALILESIWLLNPMVITISTRG). A topological domain (lumenal) is located at residue Asn132. A helical transmembrane segment spans residues 133–149 (AESVLCCLIMFTLFFLQ). The Cytoplasmic portion of the chain corresponds to 150 to 160 (KSRYTLAGILY). The chain crosses the membrane as a helical span at residues 161–181 (GLSIHFKIYPIIYCIPIAIFI). Topologically, residues 182–193 (YYNKRNQGPRTQ) are lumenal. The helical transmembrane segment at 194–214 (LTSLLNIGLSTLTTLLGCGWA) threads the bilayer. Residues 215 to 266 (MYKIYGYEFLDQAYLYHLYRTDHRHNFSVWNMLLYLDSANKENGESNLSRYA) lie on the Cytoplasmic side of the membrane. A helical membrane pass occupies residues 267-287 (FVPQLLLVLVTGCLEWWNPTF). Residues 288–310 (DNLLRVLFVQTFAFVTYNKVCTS) are Lumenal-facing. Residues 311–331 (QYFVWYLIFLPFYLSRTHIGW) form a helical membrane-spanning segment. Topologically, residues 332 to 334 (KKG) are cytoplasmic. Residues 335 to 355 (LLMATLWVGTQGIWLSQGYYL) form a helical membrane-spanning segment. The Lumenal segment spans residues 356–361 (EFEGKN). Residues 362 to 382 (VFYPGLFIASVLFFVTNVWLL) traverse the membrane as a helical segment. Over 383–403 (GQFITDIKIPTQPTVSNKKNN) the chain is Cytoplasmic.

It belongs to the PIGM family.

It localises to the endoplasmic reticulum membrane. It participates in glycolipid biosynthesis; glycosylphosphatidylinositol-anchor biosynthesis. Its function is as follows. Mannosyltransferase involved in glycosylphosphatidylinositol-anchor biosynthesis. Transfers the first alpha-1,4-mannose to GlcN-acyl-PI during GPI precursor assembly. Required for cell wall integrity. This Saccharomyces cerevisiae (strain ATCC 204508 / S288c) (Baker's yeast) protein is GPI mannosyltransferase 1 (GPI14).